Here is a 282-residue protein sequence, read N- to C-terminus: Formamidopyrimidine-DNA glycosylase (282 aa).

P2 (schiff-base intermediate with DNA) is an active-site residue. E3 functions as the Proton donor in the catalytic mechanism. K61 (proton donor; for beta-elimination activity) is an active-site residue. 3 residues coordinate DNA: H93, R112, and K158. The segment at 244–278 adopts an FPG-type zinc-finger fold; it reads DAYGREGEGCRRCGAVMHREKFMNRSSFYCPRCQP. The active-site Proton donor; for delta-elimination activity is the R268.

Belongs to the FPG family. Monomer. Requires Zn(2+) as cofactor.

It carries out the reaction Hydrolysis of DNA containing ring-opened 7-methylguanine residues, releasing 2,6-diamino-4-hydroxy-5-(N-methyl)formamidopyrimidine.. The enzyme catalyses 2'-deoxyribonucleotide-(2'-deoxyribose 5'-phosphate)-2'-deoxyribonucleotide-DNA = a 3'-end 2'-deoxyribonucleotide-(2,3-dehydro-2,3-deoxyribose 5'-phosphate)-DNA + a 5'-end 5'-phospho-2'-deoxyribonucleoside-DNA + H(+). Involved in base excision repair of DNA damaged by oxidation or by mutagenic agents. Acts as a DNA glycosylase that recognizes and removes damaged bases. Has a preference for oxidized purines, such as 7,8-dihydro-8-oxoguanine (8-oxoG). Has AP (apurinic/apyrimidinic) lyase activity and introduces nicks in the DNA strand. Cleaves the DNA backbone by beta-delta elimination to generate a single-strand break at the site of the removed base with both 3'- and 5'-phosphates. This is Formamidopyrimidine-DNA glycosylase from Mycobacterium leprae (strain Br4923).